A 528-amino-acid chain; its full sequence is UDP-glucuronosyltransferase 2A2 (528 aa).

The signal sequence occupies residues 1–21 (MIKKVLQLLIFHLTLAEIVLS). The Extracellular segment spans residues 22–494 (GNVVVWPTDG…FQYHSLDVIG (473 aa)). N-linked (GlcNAc...) asparagine glycans are attached at residues asparagine 48 and asparagine 314. Residues 495–515 (FLLACVASAILLVAKCCLFIF) traverse the membrane as a helical segment. Residues 516–528 (QKVGKTGKKKKRD) are Cytoplasmic-facing.

This sequence belongs to the UDP-glycosyltransferase family.

The protein resides in the membrane. It catalyses the reaction glucuronate acceptor + UDP-alpha-D-glucuronate = acceptor beta-D-glucuronoside + UDP + H(+). The catalysed reaction is 17alpha-estradiol + UDP-alpha-D-glucuronate = 17alpha-estradiol 3-O-(beta-D-glucuronate) + UDP + H(+). It carries out the reaction 17beta-estradiol + UDP-alpha-D-glucuronate = 17beta-estradiol 3-O-(beta-D-glucuronate) + UDP + H(+). The enzyme catalyses chenodeoxycholate + UDP-alpha-D-glucuronate = chenodeoxycholoyl-24-O-(beta-D-glucuronate) + UDP. It catalyses the reaction lithocholate + UDP-alpha-D-glucuronate = lithocholoyl-24-O-(beta-D-glucuronate) + UDP. The catalysed reaction is deoxycholate + UDP-alpha-D-glucuronate = deoxycholoyl-24-O-(beta-D-glucuronate) + UDP. It carries out the reaction hyocholate + UDP-alpha-D-glucuronate = hyocholoyl-24-O-(beta-D-glucuronate) + UDP. The enzyme catalyses hyodeoxycholate + UDP-alpha-D-glucuronate = hyodeoxycholate 6-O-(beta-D-glucuronate) + UDP + H(+). Functionally, UDP-glucuronosyltransferase (UGT) that catalyzes phase II biotransformation reactions in which lipophilic substrates are conjugated with glucuronic acid to increase the metabolite's water solubility, thereby facilitating excretion into either the urine or bile. Essential for the elimination and detoxification of drugs, xenobiotics and endogenous compounds. Catalyzes the glucuronidation of endogenous estrogen hormone estradiol. Contributes to bile acid (BA) detoxification by catalyzing the glucuronidation of BA substrates, which are natural detergents for dietary lipids absorption. Potential role in detoxification of toxic waste compounds in the amniotic fluid before birth, and air-born chemical after birth. The chain is UDP-glucuronosyltransferase 2A2 from Mus musculus (Mouse).